Consider the following 107-residue polypeptide: Anti-adapter protein IraM (107 aa).

The protein belongs to the IraM/RssC family.

Its subcellular location is the cytoplasm. Functionally, inhibits RpoS proteolysis by regulating RssB activity, thereby increasing the stability of the sigma stress factor RpoS during magnesium starvation. This Escherichia coli (strain 55989 / EAEC) protein is Anti-adapter protein IraM.